A 798-amino-acid polypeptide reads, in one-letter code: Protocadherin beta-14 (798 aa).

The N-terminal stretch at 1–26 (MEIRGALDLRKRQVLIFLVLLGLSRA) is a signal peptide. The Extracellular portion of the chain corresponds to 27–686 (GTESAHYSVA…APAQAQADSL (660 aa)). Cadherin domains lie at 35–133 (VAEE…SPTF), 138–242 (ILIK…APEF), 247–347 (YEVQ…PPEV), 352–451 (ITKR…APTF), and 456–561 (YTLF…SPFV). Cysteine 96 and cysteine 102 are oxidised to a cystine. Asparagine 169 carries N-linked (GlcNAc...) asparagine glycosylation. N-linked (GlcNAc...) asparagine glycans are attached at residues asparagine 359, asparagine 418, asparagine 436, asparagine 487, and asparagine 567. Residues 568–671 (GSAPCTELVP…LVDGFSQPYL (104 aa)) form the Cadherin 6 domain. Residues 687–711 (TVYLVVALASVSSLFLFSVLLFVAV) traverse the membrane as a helical segment. The Cytoplasmic portion of the chain corresponds to 712-798 (RLCRRSRAAS…FRNSFGLNIQ (87 aa)).

Its subcellular location is the cell membrane. In terms of biological role, potential calcium-dependent cell-adhesion protein. May be involved in the establishment and maintenance of specific neuronal connections in the brain. The chain is Protocadherin beta-14 (PCDHB14) from Homo sapiens (Human).